The chain runs to 35 residues: Photosystem II reaction center protein T (35 aa).

A helical membrane pass occupies residues 3 to 23 (ALVYTFLLVSTLGIIFFAIFF).

It belongs to the PsbT family. As to quaternary structure, PSII is composed of 1 copy each of membrane proteins PsbA, PsbB, PsbC, PsbD, PsbE, PsbF, PsbH, PsbI, PsbJ, PsbK, PsbL, PsbM, PsbT, PsbY, PsbZ, Psb30/Ycf12, at least 3 peripheral proteins of the oxygen-evolving complex and a large number of cofactors. It forms dimeric complexes.

It is found in the plastid. Its subcellular location is the chloroplast thylakoid membrane. Its function is as follows. Found at the monomer-monomer interface of the photosystem II (PS II) dimer, plays a role in assembly and dimerization of PSII. PSII is a light-driven water plastoquinone oxidoreductase, using light energy to abstract electrons from H(2)O, generating a proton gradient subsequently used for ATP formation. The protein is Photosystem II reaction center protein T of Suaeda aralocaspica (Seablite).